Consider the following 311-residue polypeptide: Acetaldehyde dehydrogenase 1 (311 aa).

NAD(+) is bound at residue 11–14 (SGNI). Cysteine 129 serves as the catalytic Acyl-thioester intermediate. NAD(+) is bound by residues 161 to 169 (SAGPGTRAN) and asparagine 288.

It belongs to the acetaldehyde dehydrogenase family.

The catalysed reaction is acetaldehyde + NAD(+) + CoA = acetyl-CoA + NADH + H(+). This chain is Acetaldehyde dehydrogenase 1, found in Novosphingobium aromaticivorans (strain ATCC 700278 / DSM 12444 / CCUG 56034 / CIP 105152 / NBRC 16084 / F199).